A 203-amino-acid polypeptide reads, in one-letter code: Small ribosomal subunit protein uS3 (203 aa).

Belongs to the universal ribosomal protein uS3 family. As to quaternary structure, part of the 30S ribosomal subunit. Forms a tight complex with proteins S10 and S14.

Functionally, binds the lower part of the 30S subunit head. Binds mRNA in the 70S ribosome, positioning it for translation. The chain is Small ribosomal subunit protein uS3 from Carsonella ruddii (strain PV).